The chain runs to 234 residues: BTB/POZ domain-containing protein KCTD5 (234 aa).

Alanine 2 carries the N-acetylalanine modification. Positions 44 to 146 (KWVRLNVGGT…LVKDKIRERD (103 aa)) constitute a BTB domain. The interval 211–234 (NSPHGPASEPSEKAKILQERGSRM) is disordered. Residues 220-234 (PSEKAKILQERGSRM) are compositionally biased toward basic and acidic residues.

In terms of assembly, homopentamer. Interacts (via C-terminus) with GRASP55/GORASP2. Interacts with CUL3 and with ubiquitinated proteins. Interacts with CRY1.

The protein resides in the cytoplasm. Its subcellular location is the cytosol. It localises to the nucleus. Functionally, its interaction with CUL3 suggests that it may act as a substrate adapter in some E3 ligase complex. Does not affect the function of Kv channel Kv2.1/KCNB1, Kv1.2/KCNA2, Kv4.2/KCND2 and Kv3.4/KCNC4. This chain is BTB/POZ domain-containing protein KCTD5 (KCTD5), found in Bos taurus (Bovine).